Consider the following 236-residue polypeptide: Uridylate kinase (236 aa).

Residue 8 to 11 (KLSG) coordinates ATP. Gly-51 lines the UMP pocket. The ATP site is built by Gly-52 and Arg-56. Residues Asp-71 and 133–140 (TGRPFFTT) each bind UMP. Positions 161, 167, and 170 each coordinate ATP.

This sequence belongs to the UMP kinase family. In terms of assembly, homohexamer.

The protein resides in the cytoplasm. The catalysed reaction is UMP + ATP = UDP + ADP. It functions in the pathway pyrimidine metabolism; CTP biosynthesis via de novo pathway; UDP from UMP (UMPK route): step 1/1. Inhibited by UTP. In terms of biological role, catalyzes the reversible phosphorylation of UMP to UDP. This chain is Uridylate kinase, found in Mesomycoplasma hyopneumoniae (strain 232) (Mycoplasma hyopneumoniae).